The following is a 623-amino-acid chain: Phosphatidylinositol-3-phosphatase SAC1 (623 aa).

Residues 1–523 (MTGPIVYVQN…SPFPDRRPVY (523 aa)) lie on the Cytoplasmic side of the membrane. An SAC domain is found at 115 to 454 (LELHLKNSTF…ADAVSVAYSG (340 aa)). Glycyl lysine isopeptide (Lys-Gly) (interchain with G-Cter in ubiquitin) cross-links involve residues Lys246 and Lys358. A helical transmembrane segment spans residues 524–544 (IQLIPMIICAALTVLGATIFF). Residues 545–552 (PKDRFTSS) are Lumenal-facing. The chain crosses the membrane as a helical span at residues 553–573 (KNLLYFAGASIVLALSTKFMF). Residues 574–623 (KNGIQFVNWPKLVDVGFLVVHQTHDKEQQFKGLKYAQSPKFSKPDPLKRD) are Cytoplasmic-facing.

In terms of assembly, component of the SPOTS complex, at least composed of LCB1/2 (LCB1 and/or LCB2), ORM1/2 (ORM1 and/or ORM2), SAC1 and TSC3.

The protein localises to the endoplasmic reticulum membrane. The protein resides in the golgi apparatus membrane. It carries out the reaction a 1,2-diacyl-sn-glycero-3-phospho-(1D-myo-inositol-3-phosphate) + H2O = a 1,2-diacyl-sn-glycero-3-phospho-(1D-myo-inositol) + phosphate. The enzyme catalyses a 1,2-diacyl-sn-glycero-3-phospho-(1D-myo-inositol 4-phosphate) + H2O = a 1,2-diacyl-sn-glycero-3-phospho-(1D-myo-inositol) + phosphate. Phosphoinositide phosphatase which catalyzes the hydrolysis of phosphatidylinositol 3-phosphate (PtdIns(3)P) and phosphatidylinositol 4-phosphate (PtdIns(4)P). Has low activity towards phosphatidylinositol-3,5-bisphosphate (PtdIns(3,5)P2). May be involved in the coordination of the activities of the secretory pathway and the actin cytoskeleton. In Saccharomyces cerevisiae (strain ATCC 204508 / S288c) (Baker's yeast), this protein is Phosphatidylinositol-3-phosphatase SAC1 (SAC1).